A 276-amino-acid polypeptide reads, in one-letter code: Tryptophan synthase alpha chain (276 aa).

Residues glutamate 49 and aspartate 60 each act as proton acceptor in the active site.

The protein belongs to the TrpA family. As to quaternary structure, tetramer of two alpha and two beta chains.

It catalyses the reaction (1S,2R)-1-C-(indol-3-yl)glycerol 3-phosphate + L-serine = D-glyceraldehyde 3-phosphate + L-tryptophan + H2O. The protein operates within amino-acid biosynthesis; L-tryptophan biosynthesis; L-tryptophan from chorismate: step 5/5. Functionally, the alpha subunit is responsible for the aldol cleavage of indoleglycerol phosphate to indole and glyceraldehyde 3-phosphate. This Corynebacterium aurimucosum (strain ATCC 700975 / DSM 44827 / CIP 107346 / CN-1) (Corynebacterium nigricans) protein is Tryptophan synthase alpha chain.